A 345-amino-acid polypeptide reads, in one-letter code: MKFLDQAKVYVRSGDGGAGCVSFRREKFIEFGGPDGGNGGRGGDVWIECVDGLNTLIDYRYQQHFKAKKGEHGMGANRAGAKGSDVVLRVPAGTQVLDEDEETILADLTEVGQRIRLLSGGNGGFGNAEFKTSTNQAPRRANPGLEGQEKWIWLRLKLIADAGLVGLPNAGKSTFLAATTAAKPKIADYPFTTLHPGLGVVRVDGREFVLADIPGLIEGAHEGAGLGDRFLGHVERCRVLLHLVDGTCEHAGKAYKTVRQELVAYGGGLEDRVEIVALSKIDSLTPELLKQQKERLQRAAKKKPLLLSSQSGKGVPEALRALLAVIDEGREAEVAEARKTEWRPI.

Residues 1–159 (MKFLDQAKVY…KWIWLRLKLI (159 aa)) enclose the Obg domain. In terms of domain architecture, OBG-type G spans 160 to 327 (ADAGLVGLPN…ALRALLAVID (168 aa)). Residues 166-173 (GLPNAGKS), 191-195 (FTTLH), 212-215 (DIPG), 279-282 (SKID), and 308-310 (SSQ) contribute to the GTP site. Mg(2+)-binding residues include Ser173 and Thr193.

Belongs to the TRAFAC class OBG-HflX-like GTPase superfamily. OBG GTPase family. In terms of assembly, monomer. The cofactor is Mg(2+).

The protein localises to the cytoplasm. Its function is as follows. An essential GTPase which binds GTP, GDP and possibly (p)ppGpp with moderate affinity, with high nucleotide exchange rates and a fairly low GTP hydrolysis rate. Plays a role in control of the cell cycle, stress response, ribosome biogenesis and in those bacteria that undergo differentiation, in morphogenesis control. The chain is GTPase Obg from Azorhizobium caulinodans (strain ATCC 43989 / DSM 5975 / JCM 20966 / LMG 6465 / NBRC 14845 / NCIMB 13405 / ORS 571).